The following is a 636-amino-acid chain: MDPSSGGGGGGGGGGSSSSSDSAPDCWDQTDMEAPGPGPCGGGGSGSGSMAAVAEAQRENLSAAFSRQLNVNAKPFVPNVHAAEFVPSFLRGPAQPPLSPAGAAGGDHGAGSGAGGPSEPVESSQDQSCEGSNSTVSMELSEPVVENGETEMSPEESWEHKEEISEAEPGGGSSGDGRPPEESTQEMMEEEEEIPKPKSAVAPPGAPKKEHVNVVFIGHVDAGKSTIGGQIMYLTGMVDKRTLEKYEREAKEKNRETWYLSWALDTNQEERDKGKTVEVGRAYFETEKKHFTILDAPGHKSFVPNMIGGASQADLAVLVISARKGEFETGFEKGGQTREHAMLAKTAGVKHLIVLINKMDDPTVNWSNERYEECKEKLVPFLKKVGFNPKKDIHFMPCSGLTGANLKEQSDFCPWYIGLPFIPYLDNLPNFNRSVDGPIRLPIVDKYKDMGTVVLGKLESGSICKGQQLVMMPNKHNVEVLGILSDDVETDSVAPGENLKIRLKGIEEEEILPGFILCDLNNLCHSGRTFDAQIVIIEHKSIICPGYNAVLHIHTCIEEVEITALICLVDKKSGEKSKTRPRFVKQDQVCIARLRTAGTICLETFKDFPQMGRFTLRDEGKTIAIGKVLKLVPEKD.

Gly residues-rich tracts occupy residues 1–16 (MDPSSGGGGGGGGGGS) and 103–116 (AAGGDHGAGSGAGG). 2 disordered regions span residues 1 to 54 (MDPS…AAVA) and 90 to 206 (LRGP…PPGA). Residues 121-138 (VESSQDQSCEGSNSTVSM) show a composition bias toward polar residues. The segment covering 183-193 (STQEMMEEEEE) has biased composition (acidic residues). Positions 209–435 (KEHVNVVFIG…DNLPNFNRSV (227 aa)) constitute a tr-type G domain. Residues 218-225 (GHVDAGKS) form a G1 region. 221-226 (DAGKST) provides a ligand contact to GTP. Residues 274–278 (GKTVE) are G2. Residues 295–298 (DAPG) are G3. GTP contacts are provided by residues 357 to 360 (NKMD) and 399 to 401 (SGL). The G4 stretch occupies residues 357 to 360 (NKMD). A G5 region spans residues 399-401 (SGL).

It belongs to the TRAFAC class translation factor GTPase superfamily. Classic translation factor GTPase family. ERF3 subfamily. In terms of assembly, component of the eRF1-eRF3-GTP ternary complex, composed of ETF1/ERF1 and ERF3 (GSPT1/ERF3A or GSPT2/ERF3B) and GTP. Component of the transient SURF (SMG1-UPF1-eRF1-eRF3) complex. The ETF1-GSPT1 complex interacts with JMJD4. Interacts with PABPC1. Interacts with SHFL.

The catalysed reaction is GTP + H2O = GDP + phosphate + H(+). GTPase component of the eRF1-eRF3-GTP ternary complex, a ternary complex that mediates translation termination in response to the termination codons UAA, UAG and UGA. GSPT1/ERF3A mediates ETF1/ERF1 delivery to stop codons: The eRF1-eRF3-GTP complex binds to a stop codon in the ribosomal A-site. GTP hydrolysis by GSPT1/ERF3A induces a conformational change that leads to its dissociation, permitting ETF1/ERF1 to accommodate fully in the A-site. Component of the transient SURF complex which recruits UPF1 to stalled ribosomes in the context of nonsense-mediated decay (NMD) of mRNAs containing premature stop codons. Required for SHFL-mediated translation termination which inhibits programmed ribosomal frameshifting (-1PRF) of mRNA from viruses and cellular genes. The protein is Eukaryotic peptide chain release factor GTP-binding subunit ERF3A (Gspt1) of Mus musculus (Mouse).